Here is a 357-residue protein sequence, read N- to C-terminus: Maleylacetate reductase 1 (357 aa).

The protein belongs to the iron-containing alcohol dehydrogenase family.

The enzyme catalyses 3-oxoadipate + NAD(+) = maleylacetate + NADH + H(+). The catalysed reaction is 3-oxoadipate + NADP(+) = maleylacetate + NADPH + H(+). The protein operates within aromatic compound metabolism; 3-chlorocatechol degradation. In terms of biological role, plays a major role in the degradation of chloroaromatic compounds by channeling maleylacetate and some of its substituted derivatives into the 3-oxoadipate pathway. This enzyme converts maleylacetate and 2-chloromaleylacetate with similar efficiencies. The sequence is that of Maleylacetate reductase 1 (macA) from Rhodococcus opacus (Nocardia opaca).